A 551-amino-acid polypeptide reads, in one-letter code: TRAF3-interacting JNK-activating modulator (551 aa).

The Cytoplasmic segment spans residues 1-526 (MISPDPRPSP…QLPPRRQCGR (526 aa)). 2 disordered regions span residues 73-95 (LEEKGKAQHPQAREQGPSRRPGQ) and 140-178 (DHLSSQAGGLPPQDTPIKKPPKHHRGTQTKAEGPTIKND). 2 coiled-coil regions span residues 240-436 (DKLK…LLTK) and 464-506 (WDLR…RKLQ). The chain crosses the membrane as a helical; Anchor for type IV membrane protein span at residues 527 to 544 (WLPVLMVVIAAALAVFLA). Residues 545 to 551 (NKDNLMI) are Extracellular-facing.

Interacts (via its coiled-coil domain) with TRAF3 (via isoleucine zipper). Interacts with MAP2K1. Interacts with PPP2CA; this interaction targets PPP2CA to the lysosomes. Interacts with TLR4. Interacts with MAVS. Interacts with TBK1.

It is found in the cell membrane. The protein resides in the golgi apparatus membrane. Its subcellular location is the lysosome membrane. The protein localises to the mitochondrion outer membrane. Functionally, adapter protein that plays essential roles in both innate and adaptive immunity. Plays a crucial role in the regulation of thymocyte development. Mechanistically, mediates TCR-stimulated activation through recruiting MAP2K1/MEK1 to the Golgi and, thereby, facilitating the interaction of MAP2K1/MEK1 with its activator BRAF. Also plays an essential role in regulatory T-cell stability and function by recruiting the serine-threonine phosphatase catalytic subunit (PPP2CA) to the lysosome, thereby facilitating the interaction of PP2Ac with the mTORC1 component RPTOR and restricting glycolytic metabolism. Positively regulates TLR4 signaling activity in macrophage-mediated inflammation by acting as a molecular clamp to facilitate LPS-induced translocation of TLR4 to lipid rafts. In response to viral infection, facilitates the recruitment of TRAF3 to MAVS within mitochondria leading to IRF3 activation and interferon production. However, participates in the maintenance of immune homeostasis and the prevention of overzealous innate immunity by promoting 'Lys-48'-dependent ubiquitination of TBK1. The sequence is that of TRAF3-interacting JNK-activating modulator (TRAF3IP3) from Homo sapiens (Human).